A 488-amino-acid polypeptide reads, in one-letter code: Ribulose bisphosphate carboxylase large chain (488 aa).

Substrate contacts are provided by N127 and T177. The Proton acceptor role is filled by K179. K181 is a substrate binding site. Residues K205, D207, and E208 each contribute to the Mg(2+) site. K205 is modified (N6-carboxylysine). H297 functions as the Proton acceptor in the catalytic mechanism. Positions 298, 330, and 382 each coordinate substrate.

Belongs to the RuBisCO large chain family. Type I subfamily. In terms of assembly, heterohexadecamer of 8 large chains and 8 small chains. The cofactor is Mg(2+).

It localises to the plastid. Its subcellular location is the chloroplast. The enzyme catalyses 2 (2R)-3-phosphoglycerate + 2 H(+) = D-ribulose 1,5-bisphosphate + CO2 + H2O. The catalysed reaction is D-ribulose 1,5-bisphosphate + O2 = 2-phosphoglycolate + (2R)-3-phosphoglycerate + 2 H(+). Functionally, ruBisCO catalyzes two reactions: the carboxylation of D-ribulose 1,5-bisphosphate, the primary event in carbon dioxide fixation, as well as the oxidative fragmentation of the pentose substrate in the photorespiration process. Both reactions occur simultaneously and in competition at the same active site. In Antithamnion sp. (Red alga), this protein is Ribulose bisphosphate carboxylase large chain.